A 457-amino-acid polypeptide reads, in one-letter code: Siroheme synthase (457 aa).

A precorrin-2 dehydrogenase /sirohydrochlorin ferrochelatase region spans residues 1 to 204 (MDHLPIFCQL…ADEKAVNATT (204 aa)). NAD(+) is bound by residues 22–23 (DV) and 43–44 (LT). Phosphoserine is present on S128. Positions 216–457 (GEVVLVGAGP…RDKLNWFSNY (242 aa)) are uroporphyrinogen-III C-methyltransferase. An S-adenosyl-L-methionine-binding site is contributed by P225. The Proton acceptor role is filled by D248. K270 acts as the Proton donor in catalysis. S-adenosyl-L-methionine contacts are provided by residues 301–303 (GGD), I306, 331–332 (TA), M382, and G411.

The protein in the N-terminal section; belongs to the precorrin-2 dehydrogenase / sirohydrochlorin ferrochelatase family. This sequence in the C-terminal section; belongs to the precorrin methyltransferase family.

It carries out the reaction uroporphyrinogen III + 2 S-adenosyl-L-methionine = precorrin-2 + 2 S-adenosyl-L-homocysteine + H(+). It catalyses the reaction precorrin-2 + NAD(+) = sirohydrochlorin + NADH + 2 H(+). The enzyme catalyses siroheme + 2 H(+) = sirohydrochlorin + Fe(2+). It participates in cofactor biosynthesis; adenosylcobalamin biosynthesis; precorrin-2 from uroporphyrinogen III: step 1/1. It functions in the pathway cofactor biosynthesis; adenosylcobalamin biosynthesis; sirohydrochlorin from precorrin-2: step 1/1. Its pathway is porphyrin-containing compound metabolism; siroheme biosynthesis; precorrin-2 from uroporphyrinogen III: step 1/1. The protein operates within porphyrin-containing compound metabolism; siroheme biosynthesis; siroheme from sirohydrochlorin: step 1/1. It participates in porphyrin-containing compound metabolism; siroheme biosynthesis; sirohydrochlorin from precorrin-2: step 1/1. In terms of biological role, multifunctional enzyme that catalyzes the SAM-dependent methylations of uroporphyrinogen III at position C-2 and C-7 to form precorrin-2 via precorrin-1. Then it catalyzes the NAD-dependent ring dehydrogenation of precorrin-2 to yield sirohydrochlorin. Finally, it catalyzes the ferrochelation of sirohydrochlorin to yield siroheme. The protein is Siroheme synthase of Salmonella choleraesuis (strain SC-B67).